Here is a 549-residue protein sequence, read N- to C-terminus: Cation/acetate symporter ActP (549 aa).

Helical transmembrane passes span 33–53 (WQAIIMFLIFVVFTLGITYWA), 77–97 (LAIAGDYMSAASFLGISALVF), 103–123 (GLIYSLGFLVGWPIILFLIAE), 148–168 (ILSACGSLVVVALYLIAQMVG), 183–203 (IAVVLVGVLMMMYVLFGGMLA), 206–226 (WVQIIKAVLLLFGASFMAFMV), 262–282 (ISALSLGLGLMFGTAGLPHIL), 303–323 (GFMGYFYILTFIIGFGAIMLV), 355–375 (LFLGFISAVAFATILAVVAGL), 404–424 (VSKITVLILGVIAIILGVLFE), 428–448 (IAFMVGLAFAIAASCNFPIIL), 464–484 (GGWLGLITAVVLMILGPTIWV), and 493–513 (IFPYEYPALFSITVAFLGIWF).

Belongs to the sodium:solute symporter (SSF) (TC 2.A.21) family.

Its subcellular location is the cell inner membrane. Its function is as follows. Transports acetate. This Escherichia fergusonii (strain ATCC 35469 / DSM 13698 / CCUG 18766 / IAM 14443 / JCM 21226 / LMG 7866 / NBRC 102419 / NCTC 12128 / CDC 0568-73) protein is Cation/acetate symporter ActP.